The primary structure comprises 257 residues: Acetylglutamate kinase (257 aa).

Residues 40–41, Arg62, and Asn155 each bind substrate; that span reads GG.

This sequence belongs to the acetylglutamate kinase family. ArgB subfamily.

It localises to the cytoplasm. It catalyses the reaction N-acetyl-L-glutamate + ATP = N-acetyl-L-glutamyl 5-phosphate + ADP. It participates in amino-acid biosynthesis; L-arginine biosynthesis; N(2)-acetyl-L-ornithine from L-glutamate: step 2/4. Functionally, catalyzes the ATP-dependent phosphorylation of N-acetyl-L-glutamate. The sequence is that of Acetylglutamate kinase from Shouchella clausii (strain KSM-K16) (Alkalihalobacillus clausii).